The primary structure comprises 241 residues: Triosephosphate isomerase (241 aa).

Residue 8–10 (NWK) participates in substrate binding. Catalysis depends on histidine 93, which acts as the Electrophile. The active-site Proton acceptor is glutamate 163. Residues glycine 169, serine 205, and 226–227 (GG) contribute to the substrate site.

It belongs to the triosephosphate isomerase family. In terms of assembly, homodimer.

The protein localises to the cytoplasm. It catalyses the reaction D-glyceraldehyde 3-phosphate = dihydroxyacetone phosphate. Its pathway is carbohydrate biosynthesis; gluconeogenesis. It functions in the pathway carbohydrate degradation; glycolysis; D-glyceraldehyde 3-phosphate from glycerone phosphate: step 1/1. Functionally, involved in the gluconeogenesis. Catalyzes stereospecifically the conversion of dihydroxyacetone phosphate (DHAP) to D-glyceraldehyde-3-phosphate (G3P). The chain is Triosephosphate isomerase from Bdellovibrio bacteriovorus (strain ATCC 15356 / DSM 50701 / NCIMB 9529 / HD100).